A 431-amino-acid polypeptide reads, in one-letter code: F-box protein pof14 (431 aa).

The region spanning 172–186 (CPDEILQLIFSYCYD) is the F-box; atypical domain.

In terms of assembly, component of the E3 ubiquitin ligase Skp1-Cullin-1-F-box (SCF) complex. Interacts with skp1, cul1 and erg9.

The protein resides in the cytoplasm. It is found in the nucleus. It localises to the endoplasmic reticulum. Functionally, expression is induced during oxidative stress. Plays an essential, SCF-independent, role in the stress response to hydrogen peroxide for survival, by negatively regulating ergosterol synthesis via direct binding to the squalene synthase erg9. The chain is F-box protein pof14 (pof14) from Schizosaccharomyces pombe (strain 972 / ATCC 24843) (Fission yeast).